Consider the following 510-residue polypeptide: NKAP family protein (510 aa).

Residues 1–22 are compositionally biased toward basic and acidic residues; it reads MSHRERDRDRDRDSDRDRDRNR. 3 disordered regions span residues 1 to 128, 149 to 220, and 239 to 401; these read MSHR…VEIQ, ERKD…NYNG, and VYER…PISE. Residues 23 to 39 are compositionally biased toward basic residues; it reads YSRSRSRGSRSRSRSRS. Basic and acidic residues predominate over residues 40–89; that stretch reads RSRDRNRNRDYNKDRSSNRDSYYNDRDYKKDRSSNRDRDYYDRDRNRDYK. Residues 96-105 are compositionally biased toward gly residues; sequence SSGGGGGGSG. Composition is skewed to low complexity over residues 112–123 and 184–219; these read SSSYRESNSNNS and NNNN…SNYN. The segment covering 262 to 273 has biased composition (basic residues); that stretch reads NKKKSKKSRRKS. Low complexity predominate over residues 274–283; sequence SSNSDSSSSD. The segment covering 292–322 has biased composition (basic residues); the sequence is REKRKKSKSRKDKKKRKEKKKHQRKSSKRSS. Residues 342–351 are compositionally biased toward basic and acidic residues; it reads DSDRSDSEGR. The span at 352 to 367 shows a compositional bias: basic residues; sequence SRKKRSKKRSKKRHDH. The segment covering 368–383 has biased composition (basic and acidic residues); that stretch reads HKESVHDASMWEEKVE.

It belongs to the NKAP family.

The sequence is that of NKAP family protein from Dictyostelium discoideum (Social amoeba).